Reading from the N-terminus, the 92-residue chain is DNA/RNA-binding protein Alba (92 aa).

K11 bears the N6-acetyllysine mark.

It belongs to the histone-like Alba family. In terms of processing, acetylated. Acetylation at Lys-11 decreases DNA-binding affinity.

It localises to the cytoplasm. The protein localises to the chromosome. Its function is as follows. Binds double-stranded DNA tightly but without sequence specificity. Involved in DNA compaction. The chain is DNA/RNA-binding protein Alba from Pyrobaculum aerophilum (strain ATCC 51768 / DSM 7523 / JCM 9630 / CIP 104966 / NBRC 100827 / IM2).